A 432-amino-acid chain; its full sequence is 3-phosphoshikimate 1-carboxyvinyltransferase (432 aa).

3 residues coordinate 3-phosphoshikimate: Lys23, Ser24, and Arg28. Position 23 (Lys23) interacts with phosphoenolpyruvate. Phosphoenolpyruvate contacts are provided by Gly95 and Arg123. The 3-phosphoshikimate site is built by Ser166, Gln168, Asp315, and Lys342. Gln168 contributes to the phosphoenolpyruvate binding site. Catalysis depends on Asp315, which acts as the Proton acceptor. Residues Arg346 and Arg390 each coordinate phosphoenolpyruvate.

It belongs to the EPSP synthase family. In terms of assembly, monomer.

The protein localises to the cytoplasm. It carries out the reaction 3-phosphoshikimate + phosphoenolpyruvate = 5-O-(1-carboxyvinyl)-3-phosphoshikimate + phosphate. It participates in metabolic intermediate biosynthesis; chorismate biosynthesis; chorismate from D-erythrose 4-phosphate and phosphoenolpyruvate: step 6/7. Functionally, catalyzes the transfer of the enolpyruvyl moiety of phosphoenolpyruvate (PEP) to the 5-hydroxyl of shikimate-3-phosphate (S3P) to produce enolpyruvyl shikimate-3-phosphate and inorganic phosphate. This is 3-phosphoshikimate 1-carboxyvinyltransferase from Lactiplantibacillus plantarum (strain ATCC BAA-793 / NCIMB 8826 / WCFS1) (Lactobacillus plantarum).